Here is a 322-residue protein sequence, read N- to C-terminus: MSIVALKNAVVTLIQKAKGSGGTSELGGSESTPLLRGSNSNSSRHDNLSSSSSDIIYGRNSAQDLENSPMSVGKDNRNGDNGSDNEKANLGFFQSVDPRVISDLIIGLSDGLTVPFALTAGLSSLGDAKLVITGGFAELISGAISMGLGGYLGAKSESDYYHAEVKKEKRKFYDNSNLINREIEDILLEINPNFSDETIVSFIKDLQRTPELMVDFIIRYGRGLDEPAENRELISAVTIGGGYLLGGLVPLVPYFFVSDVGTGLIYSIIVMVVTLFWFGYVKTKLSMGSGSSTSKKVTEGVEMVVVGGVAAGAAWFFVKLLG.

Over 1–99 the chain is Cytoplasmic; it reads MSIVALKNAV…LGFFQSVDPR (99 aa). The tract at residues 19–86 is disordered; the sequence is GSGGTSELGG…RNGDNGSDNE (68 aa). Low complexity predominate over residues 26–53; the sequence is LGGSESTPLLRGSNSNSSRHDNLSSSSS. Residues Ser-29, Ser-53, Ser-68, Ser-71, and Ser-83 each carry the phosphoserine modification. Positions 60 to 70 are enriched in polar residues; sequence NSAQDLENSPM. A helical membrane pass occupies residues 100-120; that stretch reads VISDLIIGLSDGLTVPFALTA. Topologically, residues 121–129 are vacuolar; it reads GLSSLGDAK. Residues 130 to 150 form a helical membrane-spanning segment; it reads LVITGGFAELISGAISMGLGG. Residues 151–236 lie on the Cytoplasmic side of the membrane; it reads YLGAKSESDY…PAENRELISA (86 aa). A helical transmembrane segment spans residues 237-257; the sequence is VTIGGGYLLGGLVPLVPYFFV. Residues 258–259 lie on the Vacuolar side of the membrane; the sequence is SD. Residues 260–280 form a helical membrane-spanning segment; the sequence is VGTGLIYSIIVMVVTLFWFGY. Over 281–300 the chain is Cytoplasmic; sequence VKTKLSMGSGSSTSKKVTEG. Residues 301-321 form a helical membrane-spanning segment; it reads VEMVVVGGVAAGAAWFFVKLL. Gly-322 is a topological domain (vacuolar).

The protein belongs to the CCC1 family.

It is found in the golgi apparatus membrane. Its subcellular location is the vacuole membrane. The catalysed reaction is Fe(2+)(in) = Fe(2+)(out). In terms of biological role, has a role in both calcium and manganese homeostasis. Involved in the transfer of iron and Mn(2+) from the cytosol to the vacuole for storage of these metals. In Saccharomyces cerevisiae (strain ATCC 204508 / S288c) (Baker's yeast), this protein is Protein CCC1 (CCC1).